The sequence spans 397 residues: 2,3,4,5-tetrahydropyridine-2,6-dicarboxylate N-succinyltransferase (397 aa).

The active-site Acyl-anhydride intermediate is the Glu-265. Succinyl-CoA contacts are provided by residues Arg-267, Gly-282, Ser-285, Ala-308, 323-324, Gly-331, Lys-360, and 373-376; these read DA and RQNS.

Belongs to the type 2 tetrahydrodipicolinate N-succinyltransferase family. Homotrimer.

Its subcellular location is the cytoplasm. The enzyme catalyses (S)-2,3,4,5-tetrahydrodipicolinate + succinyl-CoA + H2O = (S)-2-succinylamino-6-oxoheptanedioate + CoA. It participates in amino-acid biosynthesis; L-lysine biosynthesis via DAP pathway; LL-2,6-diaminopimelate from (S)-tetrahydrodipicolinate (succinylase route): step 1/3. Catalyzes the conversion of the cyclic tetrahydrodipicolinate (THDP) into the acyclic N-succinyl-L-2-amino-6-oxopimelate using succinyl-CoA. The sequence is that of 2,3,4,5-tetrahydropyridine-2,6-dicarboxylate N-succinyltransferase from Sulfurovum sp. (strain NBC37-1).